Consider the following 210-residue polypeptide: Small ribosomal subunit protein uS3 (210 aa).

The 69-residue stretch at 38–106 (IRAFLKKRLY…EIFINIIEVR (69 aa)) folds into the KH type-2 domain.

This sequence belongs to the universal ribosomal protein uS3 family. Part of the 30S ribosomal subunit. Forms a tight complex with proteins S10 and S14.

Binds the lower part of the 30S subunit head. Binds mRNA in the 70S ribosome, positioning it for translation. The protein is Small ribosomal subunit protein uS3 of Pelobacter propionicus (strain DSM 2379 / NBRC 103807 / OttBd1).